Reading from the N-terminus, the 162-residue chain is MYGRSNAPGCQPPVRAHPPSSPMTSRLQLAAMEQNASDAALSGMQQARSRQASPKRLRDLIPSSDVESMSLNALDDAYGHHDFSVWFEDLMPPEMELLMPTTDAKLNYLSFTRRLASSVFHSPDNRMPGGACDHTSALDARKERFATIINKFLDLHQILHDA.

Residues 1 to 58 (MYGRSNAPGCQPPVRAHPPSSPMTSRLQLAAMEQNASDAALSGMQQARSRQASPKRLR) are disordered. Polar residues predominate over residues 43 to 52 (GMQQARSRQA).

Belongs to the herpesviridae TRM2 protein family. Associates with TRM1 and TRM3 to form the tripartite terminase complex.

It is found in the host nucleus. Functionally, component of the molecular motor that translocates viral genomic DNA in empty capsid during DNA packaging. Forms a tripartite terminase complex together with TRM1 and TRM3 in the host cytoplasm. Once the complex reaches the host nucleus, it interacts with the capsid portal vertex. This portal forms a ring in which genomic DNA is translocated into the capsid. In Equine herpesvirus 1 (strain Ab4p) (EHV-1), this protein is Tripartite terminase subunit 2.